A 147-amino-acid chain; its full sequence is Lysozyme C-1 (147 aa).

Positions 1–18 (MKALIILGFLFLSVAVQG) are cleaved as a signal peptide. Residues 19–147 (KVFERCELAR…VSSYVEGCTL (129 aa)) enclose the C-type lysozyme domain. Disulfide bonds link cysteine 24–cysteine 145, cysteine 48–cysteine 133, cysteine 83–cysteine 99, and cysteine 95–cysteine 113. Residues glutamate 53 and aspartate 71 contribute to the active site.

Belongs to the glycosyl hydrolase 22 family. In terms of assembly, monomer. In terms of tissue distribution, stomach-specific.

The catalysed reaction is Hydrolysis of (1-&gt;4)-beta-linkages between N-acetylmuramic acid and N-acetyl-D-glucosamine residues in a peptidoglycan and between N-acetyl-D-glucosamine residues in chitodextrins.. Its function is as follows. Lysozymes have primarily a bacteriolytic function; those in tissues and body fluids are associated with the monocyte-macrophage system and enhance the activity of immunoagents. This chain is Lysozyme C-1 (LYZ1), found in Bos taurus (Bovine).